The following is a 186-amino-acid chain: ADP-ribosylation factor-like protein 8B (186 aa).

The note=Mediates targeting to membranes intramembrane region spans 1–19 (MLALISRLLDWFRSLFWKE). GTP is bound by residues 29-35 (QYSGKTT), 71-75 (DIGGQ), and 130-133 (NKRD). K141 is covalently cross-linked (Glycyl lysine isopeptide (Lys-Gly) (interchain with G-Cter in ubiquitin)).

It belongs to the small GTPase superfamily. Arf family. As to quaternary structure, interacts with tubulin. Interacts with BORCS5; recruits ARL8B to lysosomes. Interacts with VPS41; the interaction mediates the recruitment of the HOPS complex to lysosomes. Interacts (GTP-bound form) with PLEKHM2 (via RUN domain); the interaction is required to recruit the motor protein kinesin-1 on lysosomes. Interacts (GTP-bound form) with PLEKHM1 (via RUN domain); the interaction is required for PLEKHM1 localization to lysosomes and for ARL8B function in delivery and degradation of endocytic and autophagic cargo in lysosomes. PLEKHM1 and PLEKHM2 compete for interaction with ARL8B. Interacts (GTP-bound form) with RUFY1; the interaction is required for RUFY1 endosomal location. When GTP-bound, interacts with RUFY3 and RUFY4, but not with RUFY1, nor RUFY2. Post-translationally, ubiquitinated at Lys-141 by RNF167, leading to its degradation.

It localises to the late endosome membrane. The protein resides in the lysosome membrane. The protein localises to the cytoplasm. Its subcellular location is the cytoskeleton. It is found in the spindle. It localises to the cell projection. The protein resides in the axon. The protein localises to the synapse. Its subcellular location is the cytolytic granule membrane. It is found in the early endosome membrane. The enzyme catalyses GTP + H2O = GDP + phosphate + H(+). Its function is as follows. Small GTPase which cycles between active GTP-bound and inactive GDP-bound states. In its active state, binds to a variety of effector proteins playing a key role in the regulation of lysosomal positioning which is important for nutrient sensing, natural killer cell-mediated cytotoxicity and antigen presentation. Along with its effectors, orchestrates lysosomal transport and fusion. Localizes specifically to lysosomal membranes and mediates anterograde lysosomal motility by recruiting PLEKHM2, which in turn recruits the motor protein kinesin-1 on lysosomes. Required for lysosomal and cytolytic granule exocytosis. Critical factor involved in NK cell-mediated cytotoxicity. Drives the polarization of cytolytic granules and microtubule-organizing centers (MTOCs) toward the immune synapse between effector NK lymphocytes and target cells. In neurons, mediates the anterograde axonal long-range transport of presynaptic lysosome-related vesicles required for presynaptic biogenesis and synaptic function. Also acts as a regulator of endosome to lysosome trafficking pathways of special significance for host defense. Recruits RUFY1 onto early endosomes regulating endosomes to trans-Golgi network proteins retrieval. Regulates cargo trafficking to lysosomes by binding to PLEKHM1 and recruiting the HOPS subunit VPS41, resulting in functional assembly of the HOPS complex on lysosomal membranes. Plays an important role in cargo delivery to lysosomes for antigen presentation and microbial killing. Directs the intersection of CD1d with lipid antigens in lysosomes, and plays a role in intersecting phagosomes with lysosomes to generate phagolysosomes that kill microbes. Involved in the process of MHC II presentation. Regulates the delivery of antigens to lysosomes and the formation of MHC II-peptide complexes through the recruitment of the HOPS complex to lysosomes allowing the fusion of late endosomes to lysosomes. May play a role in chromosome segregation. The protein is ADP-ribosylation factor-like protein 8B (ARL8B) of Macaca fascicularis (Crab-eating macaque).